A 330-amino-acid chain; its full sequence is Putative pentatricopeptide repeat-containing protein At5g36300 (330 aa).

9 PPR repeats span residues 10-44 (SLSMYNSWIRYFCRTGETNEAMSLLAEIHSLGSRP), 45-75 (DPLSYVSFIETLASLRRTLEADALFHEVVRF), 83-113 (VRLYNALVSRYLRKEVSWRVVNEMKKRKFRL), 114-148 (NSFVYGKIIRIYRDNGMWKKALGIVEEIREIGLPM), 149-179 (DVEIYNSVIDTFGKYGELDEELQVLEKLQRS), 185-215 (NIRTWNSLIRWHCHHGAVDMALELFTMIFED), 231-265 (SANLFCTLANAYAQQGLCKQTVKVLKMMENEGIEP), 266-296 (NLIMLNVLINAFGTAGKHMEALSIYHHIKET), and 302-330 (DVVTYSTLMKAFTRAKKYEMVCSFYLVTL).

The protein belongs to the PPR family. P subfamily.

The chain is Putative pentatricopeptide repeat-containing protein At5g36300 from Arabidopsis thaliana (Mouse-ear cress).